Reading from the N-terminus, the 158-residue chain is SsrA-binding protein (158 aa).

This sequence belongs to the SmpB family.

It localises to the cytoplasm. Functionally, required for rescue of stalled ribosomes mediated by trans-translation. Binds to transfer-messenger RNA (tmRNA), required for stable association of tmRNA with ribosomes. tmRNA and SmpB together mimic tRNA shape, replacing the anticodon stem-loop with SmpB. tmRNA is encoded by the ssrA gene; the 2 termini fold to resemble tRNA(Ala) and it encodes a 'tag peptide', a short internal open reading frame. During trans-translation Ala-aminoacylated tmRNA acts like a tRNA, entering the A-site of stalled ribosomes, displacing the stalled mRNA. The ribosome then switches to translate the ORF on the tmRNA; the nascent peptide is terminated with the 'tag peptide' encoded by the tmRNA and targeted for degradation. The ribosome is freed to recommence translation, which seems to be the essential function of trans-translation. The polypeptide is SsrA-binding protein (Parafrankia sp. (strain EAN1pec)).